An 80-amino-acid polypeptide reads, in one-letter code: Metallothionein-like protein type 2, MT2-22 (80 aa).

The protein belongs to the metallothionein superfamily. Type 15 family.

In terms of biological role, metallothioneins have a high content of cysteine residues that bind various heavy metals. In Brassica juncea (Indian mustard), this protein is Metallothionein-like protein type 2, MT2-22.